Here is a 177-residue protein sequence, read N- to C-terminus: Thymidine kinase (177 aa).

Residue 11–18 (GPMFSGKS) coordinates ATP. Catalysis depends on glutamate 83, which acts as the Proton acceptor. Position 113 (phenylalanine 113) interacts with substrate. Cysteine 138 and cysteine 141 together coordinate Zn(2+). Residue 157-161 (IEIIG) coordinates substrate. Zn(2+) contacts are provided by cysteine 170 and cysteine 173.

The protein belongs to the thymidine kinase family. In terms of assembly, homotetramer. Two molecules of substrate bind to each enzyme tetramer.

It catalyses the reaction thymidine + ATP = dTMP + ADP + H(+). Phosphorylates thymidine and thymidine analogs, such as azidothymidine (AZT). Part of the salvage pathway for pyrimidine deoxyribonucleotide synthesis. The polypeptide is Thymidine kinase (OPG101) (Variola virus).